Reading from the N-terminus, the 466-residue chain is Bifunctional protein GlmU (466 aa).

Residues 1 to 236 form a pyrophosphorylase region; it reads MEVMPQPLTI…PAEALGINDR (236 aa). UDP-N-acetyl-alpha-D-glucosamine is bound by residues 13-16, lysine 27, glutamine 79, 84-85, 107-109, glycine 146, glutamate 161, asparagine 176, and asparagine 234; these read LAAG, GT, and YGD. A Mg(2+)-binding site is contributed by aspartate 109. Residue asparagine 234 participates in Mg(2+) binding. The interval 237–257 is linker; that stretch reads AQLAEVDRIFRDRKRRAVMAA. Positions 258-466 are N-acetyltransferase; that stretch reads GVTLIQPETI…AKKRRKLAKT (209 aa). Arginine 340 and lysine 358 together coordinate UDP-N-acetyl-alpha-D-glucosamine. Histidine 370 functions as the Proton acceptor in the catalytic mechanism. The UDP-N-acetyl-alpha-D-glucosamine site is built by tyrosine 373 and asparagine 384. Acetyl-CoA is bound by residues alanine 387, 393–394, serine 412, alanine 430, and arginine 447; that span reads NY.

It in the N-terminal section; belongs to the N-acetylglucosamine-1-phosphate uridyltransferase family. The protein in the C-terminal section; belongs to the transferase hexapeptide repeat family. As to quaternary structure, homotrimer. Mg(2+) serves as cofactor.

Its subcellular location is the cytoplasm. It catalyses the reaction alpha-D-glucosamine 1-phosphate + acetyl-CoA = N-acetyl-alpha-D-glucosamine 1-phosphate + CoA + H(+). The enzyme catalyses N-acetyl-alpha-D-glucosamine 1-phosphate + UTP + H(+) = UDP-N-acetyl-alpha-D-glucosamine + diphosphate. It participates in nucleotide-sugar biosynthesis; UDP-N-acetyl-alpha-D-glucosamine biosynthesis; N-acetyl-alpha-D-glucosamine 1-phosphate from alpha-D-glucosamine 6-phosphate (route II): step 2/2. Its pathway is nucleotide-sugar biosynthesis; UDP-N-acetyl-alpha-D-glucosamine biosynthesis; UDP-N-acetyl-alpha-D-glucosamine from N-acetyl-alpha-D-glucosamine 1-phosphate: step 1/1. The protein operates within bacterial outer membrane biogenesis; LPS lipid A biosynthesis. In terms of biological role, catalyzes the last two sequential reactions in the de novo biosynthetic pathway for UDP-N-acetylglucosamine (UDP-GlcNAc). The C-terminal domain catalyzes the transfer of acetyl group from acetyl coenzyme A to glucosamine-1-phosphate (GlcN-1-P) to produce N-acetylglucosamine-1-phosphate (GlcNAc-1-P), which is converted into UDP-GlcNAc by the transfer of uridine 5-monophosphate (from uridine 5-triphosphate), a reaction catalyzed by the N-terminal domain. The protein is Bifunctional protein GlmU of Solibacter usitatus (strain Ellin6076).